Reading from the N-terminus, the 144-residue chain is Large ribosomal subunit protein uL15 (144 aa).

The tract at residues 1–62 (MELNNLKPAE…GQMPLQRRLP (62 aa)) is disordered. The span at 21–31 (RGIGSGLGKTA) shows a compositional bias: gly residues.

This sequence belongs to the universal ribosomal protein uL15 family. Part of the 50S ribosomal subunit.

Binds to the 23S rRNA. In Paraburkholderia phymatum (strain DSM 17167 / CIP 108236 / LMG 21445 / STM815) (Burkholderia phymatum), this protein is Large ribosomal subunit protein uL15.